Reading from the N-terminus, the 124-residue chain is uncharacterized protein (124 aa).

Residues 83–100 (VTCFSLYTICYRIVLIWA) traverse the membrane as a helical segment.

The protein localises to the membrane. This is an uncharacterized protein from Saccharomyces cerevisiae (strain ATCC 204508 / S288c) (Baker's yeast).